A 715-amino-acid chain; its full sequence is Fatty acid oxidation complex subunit alpha (715 aa).

Positions 1-190 (MIYEGKAITV…KVGAVDAVVA (190 aa)) are enoyl-CoA hydratase/isomerase. D297 contacts substrate. Residues 312–715 (HDVKQAAVLG…MAKNGQRFFN (404 aa)) are 3-hydroxyacyl-CoA dehydrogenase. NAD(+) is bound by residues M325, D344, 401-403 (VVE), K408, and S430. H451 acts as the For 3-hydroxyacyl-CoA dehydrogenase activity in catalysis. N454 serves as a coordination point for NAD(+). The substrate site is built by N501 and Y660.

The protein in the N-terminal section; belongs to the enoyl-CoA hydratase/isomerase family. In the C-terminal section; belongs to the 3-hydroxyacyl-CoA dehydrogenase family. In terms of assembly, heterotetramer of two alpha chains (FadB) and two beta chains (FadA).

The enzyme catalyses a (3S)-3-hydroxyacyl-CoA + NAD(+) = a 3-oxoacyl-CoA + NADH + H(+). It carries out the reaction a (3S)-3-hydroxyacyl-CoA = a (2E)-enoyl-CoA + H2O. The catalysed reaction is a 4-saturated-(3S)-3-hydroxyacyl-CoA = a (3E)-enoyl-CoA + H2O. It catalyses the reaction (3S)-3-hydroxybutanoyl-CoA = (3R)-3-hydroxybutanoyl-CoA. The enzyme catalyses a (3Z)-enoyl-CoA = a 4-saturated (2E)-enoyl-CoA. It carries out the reaction a (3E)-enoyl-CoA = a 4-saturated (2E)-enoyl-CoA. The protein operates within lipid metabolism; fatty acid beta-oxidation. Involved in the aerobic and anaerobic degradation of long-chain fatty acids via beta-oxidation cycle. Catalyzes the formation of 3-oxoacyl-CoA from enoyl-CoA via L-3-hydroxyacyl-CoA. It can also use D-3-hydroxyacyl-CoA and cis-3-enoyl-CoA as substrate. In Pseudomonas putida (strain ATCC 700007 / DSM 6899 / JCM 31910 / BCRC 17059 / LMG 24140 / F1), this protein is Fatty acid oxidation complex subunit alpha.